The chain runs to 510 residues: Adenosine deaminase 2 (510 aa).

The signal sequence occupies residues 1-24 (MSGWPVLPALLLAVAMSSFHSATS). Positions 25 to 95 (RDEERNRLLM…GLMEKSAVFN (71 aa)) are dimerization. Zn(2+) contacts are provided by His-107 and His-109. Asp-110 provides a ligand contact to substrate. N-linked (GlcNAc...) asparagine glycosylation is present at Asn-122. The PRB domain stretch occupies residues 122-182 (NATYRPYCYF…TEFDNSLLRT (61 aa)). A disulfide bond links Cys-132 and Cys-156. Asn-171 carries an N-linked (GlcNAc...) asparagine glycan. Substrate-binding positions include 201-208 (WKKFKTIF), His-290, and Gly-323. His-353 contacts Zn(2+). Glu-356 functions as the Proton donor in the catalytic mechanism. N-linked (GlcNAc...) asparagine glycosylation is present at Asn-375. Residue His-381 is the Proton acceptor of the active site. A Zn(2+)-binding site is contributed by Asp-438. Asp-439 serves as a coordination point for substrate.

Belongs to the metallo-dependent hydrolases superfamily. Adenosine and AMP deaminases family. ADGF subfamily. As to quaternary structure, homodimer. Interacts with adenosine receptors. Binds heparin. The cofactor is Zn(2+).

The protein resides in the secreted. The catalysed reaction is adenosine + H2O + H(+) = inosine + NH4(+). Its function is as follows. Adenosine deaminase that may contribute to the degradation of extracellular adenosine, a signaling molecule that controls a variety of cellular responses. Requires elevated adenosine levels for optimal enzyme activity. Binds to cell surfaces via proteoglycans and may play a role in the regulation of cell proliferation and differentiation, independently of its enzyme activity. The sequence is that of Adenosine deaminase 2 from Sus scrofa (Pig).